The primary structure comprises 369 residues: Protein-glutamate methylesterase/protein-glutamine glutaminase (369 aa).

The Response regulatory domain occupies 4–121 (KVLVVDDSSF…ARNRDEAVSL (118 aa)). Asp55 carries the post-translational modification 4-aspartylphosphate. Residues 146–171 (ATSSARPLASRTAAPAASAPARPATT) show a composition bias toward low complexity. The disordered stretch occupies residues 146–175 (ATSSARPLASRTAAPAASAPARPATTKFRA). One can recognise a CheB-type methylesterase domain in the interval 176–369 (SGKKYQLTAI…ERMLVEVGLA (194 aa)). Catalysis depends on residues Ser188, His215, and Asp311.

This sequence belongs to the CheB family. Post-translationally, phosphorylated by CheA. Phosphorylation of the N-terminal regulatory domain activates the methylesterase activity.

The protein resides in the cytoplasm. The enzyme catalyses [protein]-L-glutamate 5-O-methyl ester + H2O = L-glutamyl-[protein] + methanol + H(+). The catalysed reaction is L-glutaminyl-[protein] + H2O = L-glutamyl-[protein] + NH4(+). Functionally, involved in chemotaxis. Part of a chemotaxis signal transduction system that modulates chemotaxis in response to various stimuli. Catalyzes the demethylation of specific methylglutamate residues introduced into the chemoreceptors (methyl-accepting chemotaxis proteins or MCP) by CheR. Also mediates the irreversible deamidation of specific glutamine residues to glutamic acid. This Vibrio parahaemolyticus serotype O3:K6 (strain RIMD 2210633) protein is Protein-glutamate methylesterase/protein-glutamine glutaminase.